The following is a 137-amino-acid chain: 2-iminobutanoate/2-iminopropanoate deaminase (137 aa).

The residue at position 2 (S2) is an N-acetylserine. An N6-succinyllysine mark is found at K13, K60, and K67. Phosphothreonine is present on T74.

Belongs to the RutC family. In terms of assembly, homotrimer. Interacts with YTHDF2. Liver and kidney.

The protein localises to the cytoplasm. The protein resides in the nucleus. It is found in the peroxisome. It localises to the mitochondrion. It carries out the reaction 2-iminobutanoate + H2O = 2-oxobutanoate + NH4(+). The catalysed reaction is 2-iminopropanoate + H2O = pyruvate + NH4(+). In terms of biological role, catalyzes the hydrolytic deamination of enamine/imine intermediates that form during the course of normal metabolism. May facilitate the release of ammonia from these potentially toxic reactive metabolites, reducing their impact on cellular components. It may act on enamine/imine intermediates formed by several types of pyridoxal-5'-phosphate-dependent dehydratases including L-threonine dehydratase. Its function is as follows. Also promotes endoribonucleolytic cleavage of some transcripts by promoting recruitment of the ribonuclease P/MRP complex. Acts by bridging YTHDF2 and the ribonuclease P/MRP complex. RIDA/HRSP12 binds to N6-methyladenosine (m6A)-containing mRNAs containing a 5'-GGUUC-3' motif: cooperative binding of RIDA/HRSP12 and YTHDF2 to such transcripts lead to recruitment of the ribonuclease P/MRP complex and subsequent endoribonucleolytic cleavage. The protein is 2-iminobutanoate/2-iminopropanoate deaminase of Rattus norvegicus (Rat).